A 164-amino-acid polypeptide reads, in one-letter code: FMN reductase (NADH) RutF (164 aa).

It belongs to the non-flavoprotein flavin reductase family. RutF subfamily.

The catalysed reaction is FMNH2 + NAD(+) = FMN + NADH + 2 H(+). In terms of biological role, catalyzes the reduction of FMN to FMNH2 which is used to reduce pyrimidine by RutA via the Rut pathway. The polypeptide is FMN reductase (NADH) RutF (Escherichia coli (strain K12 / MC4100 / BW2952)).